A 971-amino-acid polypeptide reads, in one-letter code: uncharacterized protein (971 aa).

The signal sequence occupies residues 1 to 24; sequence MQSNLLKVLGVLAIVATLVCFIFA. The disordered stretch occupies residues 127–146; sequence RTRPGKSNLDDSNQMIPIPR. 6 helical membrane passes run 611–631, 721–741, 753–773, 795–815, 832–852, and 865–885; these read IKAI…LGFA, LGLS…IVII, AFMA…FLLF, VVMM…LDFV, FIGT…INWF, and GVNM…YGYV. A compositionally biased stretch (basic residues) spans 933-944; the sequence is TSRAKSRLKQRN. The interval 933–971 is disordered; the sequence is TSRAKSRLKQRNRTLEHAEQNSKKYMKKIGENTNEGTLK. A compositionally biased stretch (basic and acidic residues) spans 945–954; the sequence is RTLEHAEQNS.

It belongs to the TrbL/VirB6 family.

The protein resides in the cell membrane. This is an uncharacterized protein from Rickettsia typhi (strain ATCC VR-144 / Wilmington).